A 142-amino-acid chain; its full sequence is Heat shock protein HSP.16.4 (142 aa).

The sHSP domain occupies 27–142 (NLFNDLKSNL…KEIKTSIPIE (116 aa)).

Belongs to the small heat shock protein (HSP20) family.

Its subcellular location is the cytoplasm. This is Heat shock protein HSP.16.4 from Streptococcus thermophilus.